A 175-amino-acid chain; its full sequence is Ribosome maturation factor RimM (175 aa).

Positions 97–169 (EDKFYFHEII…TVRVITPEGL (73 aa)) constitute a PRC barrel domain.

This sequence belongs to the RimM family. As to quaternary structure, binds ribosomal protein uS19.

It localises to the cytoplasm. Functionally, an accessory protein needed during the final step in the assembly of 30S ribosomal subunit, possibly for assembly of the head region. Essential for efficient processing of 16S rRNA. May be needed both before and after RbfA during the maturation of 16S rRNA. It has affinity for free ribosomal 30S subunits but not for 70S ribosomes. In Christiangramia forsetii (strain DSM 17595 / CGMCC 1.15422 / KT0803) (Gramella forsetii), this protein is Ribosome maturation factor RimM.